Consider the following 383-residue polypeptide: tRNA-specific 2-thiouridylase MnmA (383 aa).

Residues 6–13 and Leu32 each bind ATP; that span reads AMSGGVDS. Cys101 functions as the Nucleophile in the catalytic mechanism. Residues Cys101 and Cys199 are joined by a disulfide bond. Gly125 is an ATP binding site. The segment at 148–150 is interaction with tRNA; it reads KDQ. Cys199 functions as the Cysteine persulfide intermediate in the catalytic mechanism.

Belongs to the MnmA/TRMU family.

Its subcellular location is the cytoplasm. The catalysed reaction is S-sulfanyl-L-cysteinyl-[protein] + uridine(34) in tRNA + AH2 + ATP = 2-thiouridine(34) in tRNA + L-cysteinyl-[protein] + A + AMP + diphosphate + H(+). In terms of biological role, catalyzes the 2-thiolation of uridine at the wobble position (U34) of tRNA, leading to the formation of s(2)U34. This is tRNA-specific 2-thiouridylase MnmA from Kocuria rhizophila (strain ATCC 9341 / DSM 348 / NBRC 103217 / DC2201).